A 1152-amino-acid polypeptide reads, in one-letter code: Integrin alpha-M (1152 aa).

The first 16 residues, 1–16, serve as a signal peptide directing secretion; the sequence is MALRVLLLTALTLCHG. Residues 17–1104 are Extracellular-facing; that stretch reads FNLDTENAMT…TKVEPFEVPN (1088 aa). 2 FG-GAP repeats span residues 18-75 and 76-135; these read NLDT…SCEP and IRLQ…QQPQ. Residues C66 and C73 are joined by a disulfide bond. The N-linked (GlcNAc...) asparagine glycan is linked to N86. An intrachain disulfide couples C105 to C123. Positions 150 to 328 constitute a VWFA domain; the sequence is DIAFLIDGSG…EALKTIQNQL (179 aa). N-linked (GlcNAc...) asparagine glycosylation occurs at N240. FG-GAP repeat units lie at residues 339 to 390, 391 to 442, 443 to 503, 506 to 564, and 569 to 629; these read QTGS…STFI, NMTR…TGMW, ESNA…RARW, DAVL…SGIS, and QRIA…FNPR. N-linked (GlcNAc...) asparagine glycosylation occurs at N391. Ca(2+)-binding residues include D465, D467, N469, D473, D529, N531, D533, D537, D592, D596, and D600. N469 is a glycosylation site (N-linked (GlcNAc...) asparagine). Cysteines 654 and 711 form a disulfide. 3 N-linked (GlcNAc...) asparagine glycosylation sites follow: N692, N696, and N734. C770 and C776 are disulfide-bonded. N801 is a glycosylation site (N-linked (GlcNAc...) asparagine). Cysteines 847 and 864 form a disulfide. N880, N900, N911, N940, N946, N978, N993, and N1021 each carry an N-linked (GlcNAc...) asparagine glycan. 2 disulfide bridges follow: C998–C1022 and C1027–C1032. 3 N-linked (GlcNAc...) asparagine glycosylation sites follow: N1044, N1050, and N1075. Residues 1105-1128 traverse the membrane as a helical segment; the sequence is PLPLIVGSSVGGLLLLALITAALY. The Cytoplasmic segment spans residues 1129–1152; it reads KLGFFKRQYKDMMSEGGPPGAEPQ. The GFFKR motif signature appears at 1131–1135; the sequence is GFFKR.

Belongs to the integrin alpha chain family. As to quaternary structure, heterodimer of an alpha and a beta subunit. ITGAM associates with ITGB2. Found in a complex with CD177 and ITGB2/CD18. Interacts with JAM3. Interacts with THBD. Interacts with complement factor H/CFH; this interaction mediates adhesion of neutrophils to pathogens leading to pathogen clearance. Interacts with TMEM268; this interaction inhibits ITGAM degradation via the endosome-lysosome pathway. In terms of tissue distribution, predominantly expressed in monocytes and granulocytes. Expressed in neutrophils (at protein level).

The protein localises to the cell membrane. It localises to the membrane raft. In terms of biological role, integrin ITGAM/ITGB2 is implicated in various adhesive interactions of monocytes, macrophages and granulocytes as well as in mediating the uptake of complement-coated particles and pathogens. It is identical with CR-3, the receptor for the iC3b fragment of the third complement component. It probably recognizes the R-G-D peptide in C3b. Integrin ITGAM/ITGB2 is also a receptor for fibrinogen, factor X and ICAM1. It recognizes P1 and P2 peptides of fibrinogen gamma chain. Regulates neutrophil migration. In association with beta subunit ITGB2/CD18, required for CD177-PRTN3-mediated activation of TNF primed neutrophils. May regulate phagocytosis-induced apoptosis in extravasated neutrophils. May play a role in mast cell development. Required with TYROBP/DAP12 in microglia to control production of microglial superoxide ions which promote the neuronal apoptosis that occurs during brain development. This Homo sapiens (Human) protein is Integrin alpha-M (ITGAM).